The chain runs to 268 residues: 4-hydroxy-tetrahydrodipicolinate reductase (268 aa).

NAD(+) contacts are provided by residues 10–15 (GSTGRM), Glu-36, 99–101 (GTT), and 123–126 (APNM). His-156 functions as the Proton donor/acceptor in the catalytic mechanism. A (S)-2,3,4,5-tetrahydrodipicolinate-binding site is contributed by His-157. The Proton donor role is filled by Lys-160. Residue 166 to 167 (GT) coordinates (S)-2,3,4,5-tetrahydrodipicolinate.

It belongs to the DapB family.

Its subcellular location is the cytoplasm. The enzyme catalyses (S)-2,3,4,5-tetrahydrodipicolinate + NAD(+) + H2O = (2S,4S)-4-hydroxy-2,3,4,5-tetrahydrodipicolinate + NADH + H(+). It carries out the reaction (S)-2,3,4,5-tetrahydrodipicolinate + NADP(+) + H2O = (2S,4S)-4-hydroxy-2,3,4,5-tetrahydrodipicolinate + NADPH + H(+). The protein operates within amino-acid biosynthesis; L-lysine biosynthesis via DAP pathway; (S)-tetrahydrodipicolinate from L-aspartate: step 4/4. In terms of biological role, catalyzes the conversion of 4-hydroxy-tetrahydrodipicolinate (HTPA) to tetrahydrodipicolinate. This Nitrosomonas europaea (strain ATCC 19718 / CIP 103999 / KCTC 2705 / NBRC 14298) protein is 4-hydroxy-tetrahydrodipicolinate reductase.